A 101-amino-acid polypeptide reads, in one-letter code: uncharacterized protein (101 aa).

An N-terminal signal peptide occupies residues 1–27; the sequence is MQLTGSIYPWFTAYALLKSTLMELINS. A run of 2 helical transmembrane segments spans residues 42–64 and 79–98; these read LVPY…AISF and TFVF…NTFL.

Its subcellular location is the cytoplasm. It localises to the nucleus membrane. This is an uncharacterized protein from Schizosaccharomyces pombe (strain 972 / ATCC 24843) (Fission yeast).